A 20-amino-acid chain; its full sequence is Pregnancy-associated glycoprotein 71D (20 aa).

N4 carries N-linked (GlcNAc...) asparagine glycosylation.

It belongs to the peptidase A1 family. As to expression, chorionic epithelium (trophectoderm) and placental cotyledons.

The protein localises to the secreted. Its subcellular location is the extracellular space. The polypeptide is Pregnancy-associated glycoprotein 71D (Bison bonasus (European bison)).